Consider the following 159-residue polypeptide: Transcription elongation factor GreA (159 aa).

Positions 3 to 37 form a coiled coil; the sequence is TNKEVVLTYEGLQKLEQELENLKTVKRREVAERIK.

It belongs to the GreA/GreB family.

Its function is as follows. Necessary for efficient RNA polymerase transcription elongation past template-encoded arresting sites. The arresting sites in DNA have the property of trapping a certain fraction of elongating RNA polymerases that pass through, resulting in locked ternary complexes. Cleavage of the nascent transcript by cleavage factors such as GreA or GreB allows the resumption of elongation from the new 3'terminus. GreA releases sequences of 2 to 3 nucleotides. This chain is Transcription elongation factor GreA, found in Acetivibrio thermocellus (strain ATCC 27405 / DSM 1237 / JCM 9322 / NBRC 103400 / NCIMB 10682 / NRRL B-4536 / VPI 7372) (Clostridium thermocellum).